We begin with the raw amino-acid sequence, 674 residues long: Xaa-Pro aminopeptidase 2 (674 aa).

A signal peptide spans 1 to 21 (MARAHWGCCPWLVLLCACAWG). N-linked (GlcNAc...) asparagine glycosylation is found at Asn-35, Asn-49, and Asn-65. Residue Arg-116 coordinates substrate. N-linked (GlcNAc...) asparagine glycans are attached at residues Asn-278 and Asn-291. His-430 contacts substrate. The Zn(2+) site is built by Asp-450, Asp-461, and His-524. Residues His-524, His-533, and Glu-555 each contribute to the substrate site. Zn(2+) is bound by residues Glu-555 and Glu-569. Ala-649 carries GPI-anchor amidated alanine lipidation. Positions 650–674 (ARAPDTASWASVLVVSTLAILGWSV) are cleaved as a propeptide — removed in mature form.

Belongs to the peptidase M24B family. Homotrimer. It depends on Zn(2+) as a cofactor. Post-translationally, N-glycosylated. As to expression, expressed in kidney, lung, heart, placenta, liver, small intestine and colon. No expression in brain, skeletal muscle, pancreas, spleen, thymus, prostate, testis and ovary.

The protein resides in the cell membrane. It catalyses the reaction Release of any N-terminal amino acid, including proline, that is linked to proline, even from a dipeptide or tripeptide.. With respect to regulation, inhibited by apstatin and the chelating agent 1,10-phenanthroline. Also inhibited by high concentrations of Zn(2+). Not significantly inhibited by bestatin or phosphoramidon. Its function is as follows. Membrane-bound metalloprotease which catalyzes the removal of a penultimate prolyl residue from the N-termini of peptides, such as Arg-Pro-Pro. May play a role in the metabolism of the vasodilator bradykinin. The chain is Xaa-Pro aminopeptidase 2 (XPNPEP2) from Homo sapiens (Human).